A 482-amino-acid polypeptide reads, in one-letter code: Protein farnesyltransferase subunit beta (482 aa).

PFTB repeat units follow at residues 131–172 (ESNA…VTLG), 182–223 (REKM…SILN), 230–271 (TQGL…ILIN), and 278–319 (LDSL…VLLQ). Residues 256–259 (HGGY) and 298–301 (RTNK) contribute to the (2E,6E)-farnesyl diphosphate site. The Zn(2+) site is built by D304 and C306. 307–310 (YTFW) contacts (2E,6E)-farnesyl diphosphate. Residues 329–372 (VHGSSHISEGTNEEHHAHDEDDLEDSDDDDDSDEDNDEDSVNGH) are disordered. Positions 348 to 368 (EDDLEDSDDDDDSDEDNDEDS) are enriched in acidic residues. The PFTB 5 repeat unit spans residues 391 to 433 (SLGLQRYVLLCSKIPDGGFRDKPRKPRDFYHTCYCLSGLSVAQ). H421 contributes to the Zn(2+) binding site.

This sequence belongs to the protein prenyltransferase subunit beta family. Heterodimer of FTA and FTB (farnesyltransferase). Heterodimer of an alpha and a beta subunit. The cofactor is Zn(2+).

It catalyses the reaction L-cysteinyl-[protein] + (2E,6E)-farnesyl diphosphate = S-(2E,6E)-farnesyl-L-cysteinyl-[protein] + diphosphate. In terms of biological role, catalyzes the transfer of a farnesyl moiety from farnesyl diphosphate to a cysteine at the fourth position from the C-terminus of several proteins having the C-terminal sequence Cys-aliphatic-aliphatic-X (CaaX). The beta subunit is responsible for peptide-binding. Acts as an abscisic acid (ABA) negative regulator by mediating ASG2 farnesylation and consequently monitoring its subcellular localization. Involved in responses to salt (NaCl) and osmotic (e.g. in response to mannitol and PEG) stresses. This is Protein farnesyltransferase subunit beta (FTB) from Arabidopsis thaliana (Mouse-ear cress).